The following is a 291-amino-acid chain: MAGMKEIRGKIKSVQNTRKITKAMEMVAASKMRRAQERMRAARPYADKVRAIAAHMSRANPEYRHPFMVANEGAKTAGIILVTTDKGLCGGLNTNVLRASVQKFKELEEKGQKVEATAIGGKGLGFLNRFGAKVLSQVVHLGDTPHLDKLIGAVKTQLDLYSEGKLSAVYLAYTRFINTMKQEAVIEQLLPLSSEHFEADDGTPATSWDYIYEPDAQAVVDELLVRYVEALVYQAVAENMASEQSARMVAMKAASDNAKTVISELQLVYNKSRQAAITKELSEIVGGAAAV.

Belongs to the ATPase gamma chain family. In terms of assembly, F-type ATPases have 2 components, CF(1) - the catalytic core - and CF(0) - the membrane proton channel. CF(1) has five subunits: alpha(3), beta(3), gamma(1), delta(1), epsilon(1). CF(0) has three main subunits: a, b and c.

Its subcellular location is the cell inner membrane. Its function is as follows. Produces ATP from ADP in the presence of a proton gradient across the membrane. The gamma chain is believed to be important in regulating ATPase activity and the flow of protons through the CF(0) complex. This Burkholderia multivorans (strain ATCC 17616 / 249) protein is ATP synthase gamma chain.